Reading from the N-terminus, the 805-residue chain is Zinc finger CCCH domain-containing protein 11B (805 aa).

2 C3H1-type zinc fingers span residues 2 to 29 (PNQGEDCYFFFYSTCTKGDSCPFRHCEA) and 31 to 57 (LGNETVCTLWQEGRCFRRVCRFRHMEI). 6 disordered regions span residues 140 to 194 (KVES…GLRV), 223 to 351 (KKMK…DKVN), 364 to 433 (MLLE…TCIK), 449 to 468 (IVASKGQSEEPAGKTKSMQE), 481 to 506 (KALRVQQSSESSTSSPSQHEATPGAR), and 715 to 805 (VTVP…PLEL). The span at 160 to 175 (ADDDEDDDDQFSEEGD) shows a compositional bias: acidic residues. Residues 364–390 (MLLERASQKHGESQTKLKTEGPSKTDD) are compositionally biased toward basic and acidic residues. Over residues 391-402 (STSGARSSSTIR) the composition is skewed to polar residues. Residues 403 to 423 (IKTFSEVLAEEEHRQQEAERQ) are a coiled coil. 2 stretches are compositionally biased toward basic and acidic residues: residues 412 to 433 (EEEHRQQEAERQKSKKDTTCIK) and 455 to 468 (QSEEPAGKTKSMQE). Low complexity-rich tracts occupy residues 486-498 (QQSSESSTSSPSQ) and 730-749 (PPTQSSSDSSPPEVSGPSSS). Positions 750–763 (QMSMKTRRLSSAST) are enriched in polar residues. Over residues 789–805 (EIDLDPGKDEDDLPLEL) the composition is skewed to acidic residues.

Its function is as follows. May play a role in mRNA transport. This Homo sapiens (Human) protein is Zinc finger CCCH domain-containing protein 11B.